Consider the following 230-residue polypeptide: Spliceosome-associated protein CWC15 homolog (230 aa).

Disordered stretches follow at residues 1-157 and 164-183; these read MTTA…EEKQ and AGNPLLNDTPAGSSTSGGDF. Positions 25 to 34 are enriched in polar residues; that stretch reads KLSNQYSSKD. Coiled coils occupy residues 47-82 and 119-164; these read GQETEADLRKKDLRRELEDKERNAIREKRARDSASS and DSDE…NILA. Positions 52 to 78 are enriched in basic and acidic residues; the sequence is ADLRKKDLRRELEDKERNAIREKRARD. Residues 104–125 are compositionally biased toward acidic residues; that stretch reads DADEAVDELNSSDDDDSDEDDT. Residues 131–157 are compositionally biased toward basic and acidic residues; it reads ELEKIKKERAEEKAARDEEIKEKEEKQ.

It belongs to the CWC15 family. As to quaternary structure, component of spliceosomal complex.

The protein resides in the nucleus. Its function is as follows. Component of a spliceosomal complex that is required for activating pre-mRNA splicing. The sequence is that of Spliceosome-associated protein CWC15 homolog from Caenorhabditis elegans.